Consider the following 300-residue polypeptide: UDP-N-acetylenolpyruvoylglucosamine reductase (300 aa).

One can recognise an FAD-binding PCMH-type domain in the interval 29–193 (TGGPADLLVF…LSATFKLRSG (165 aa)). The active site involves Arg-172. The Proton donor role is filled by Ser-222. Residue Glu-292 is part of the active site.

It belongs to the MurB family. It depends on FAD as a cofactor.

The protein localises to the cytoplasm. It carries out the reaction UDP-N-acetyl-alpha-D-muramate + NADP(+) = UDP-N-acetyl-3-O-(1-carboxyvinyl)-alpha-D-glucosamine + NADPH + H(+). It participates in cell wall biogenesis; peptidoglycan biosynthesis. In terms of biological role, cell wall formation. The polypeptide is UDP-N-acetylenolpyruvoylglucosamine reductase (Pediococcus pentosaceus (strain ATCC 25745 / CCUG 21536 / LMG 10740 / 183-1w)).